The following is a 69-amino-acid chain: Large ribosomal subunit protein eL38z/eL38y (69 aa).

Belongs to the eukaryotic ribosomal protein eL38 family.

The chain is Large ribosomal subunit protein eL38z/eL38y (RPL38A) from Arabidopsis thaliana (Mouse-ear cress).